A 186-amino-acid polypeptide reads, in one-letter code: Ribosome-recycling factor (186 aa).

The protein belongs to the RRF family.

Its subcellular location is the cytoplasm. Functionally, responsible for the release of ribosomes from messenger RNA at the termination of protein biosynthesis. May increase the efficiency of translation by recycling ribosomes from one round of translation to another. The polypeptide is Ribosome-recycling factor (Herminiimonas arsenicoxydans).